The chain runs to 110 residues: uncharacterized protein (110 aa).

This is an uncharacterized protein from Microplitis demolitor bracovirus (isolate Webb) (MdBV).